The following is a 418-amino-acid chain: Tyrosine--tRNA ligase (418 aa).

Tyr38 is a binding site for L-tyrosine. Positions 43-52 (CTAKSLHVGS) match the 'HIGH' region motif. Positions 175 and 179 each coordinate L-tyrosine. The 'KMSKS' region motif lies at 235-239 (KMGKT). Residue Lys238 participates in ATP binding. The S4 RNA-binding domain maps to 348–413 (LPIIKLLQMC…CGKKRHLKVM (66 aa)).

It belongs to the class-I aminoacyl-tRNA synthetase family. TyrS type 1 subfamily. Homodimer.

The protein localises to the cytoplasm. It carries out the reaction tRNA(Tyr) + L-tyrosine + ATP = L-tyrosyl-tRNA(Tyr) + AMP + diphosphate + H(+). Its function is as follows. Catalyzes the attachment of tyrosine to tRNA(Tyr) in a two-step reaction: tyrosine is first activated by ATP to form Tyr-AMP and then transferred to the acceptor end of tRNA(Tyr). The sequence is that of Tyrosine--tRNA ligase from Ehrlichia chaffeensis (strain ATCC CRL-10679 / Arkansas).